We begin with the raw amino-acid sequence, 361 residues long: Mitogen-activated protein kinase 14B (361 aa).

The Protein kinase domain maps to 25 to 309; that stretch reads YQNLSPVGSG…ASQALAHPYF (285 aa). ATP-binding positions include 31-39 and Lys-54; that span reads VGSGAYGSV. Catalysis depends on Asp-151, which acts as the Proton acceptor. Residue Thr-181 is modified to Phosphothreonine; by MAP2K6. The TXY motif lies at 181 to 183; that stretch reads TGY. Phosphotyrosine; by MAP2K6 is present on Tyr-183.

It belongs to the protein kinase superfamily. CMGC Ser/Thr protein kinase family. MAP kinase subfamily. Requires Mg(2+) as cofactor. Post-translationally, dually phosphorylated on Thr-181 and Tyr-183, which activates the enzyme. In terms of tissue distribution, predominantly expressed in the ovary. Lower levels present in brain, gill, heart, spleen, kidney, muscle and gut.

It is found in the cytoplasm. The protein resides in the nucleus. The catalysed reaction is L-seryl-[protein] + ATP = O-phospho-L-seryl-[protein] + ADP + H(+). It carries out the reaction L-threonyl-[protein] + ATP = O-phospho-L-threonyl-[protein] + ADP + H(+). Activated by threonine and tyrosine phosphorylation by the dual specificity kinase, MKK6. In terms of biological role, serine/threonine kinase which acts as an essential component of the MAP kinase signal transduction pathway. Mapk14b is one of the four p38 MAPKs which play an important role in the cascades of cellular responses evoked by extracellular stimuli such as pro-inflammatory cytokines or physical stress leading to direct activation of transcription factors. Accordingly, p38 MAPKs phosphorylate a broad range of proteins and it has been estimated that they may have approximately 200 to 300 substrates each. Some of the targets are downstream kinases which are activated through phosphorylation and further phosphorylate additional targets. The protein is Mitogen-activated protein kinase 14B (mapk14b) of Cyprinus carpio (Common carp).